Consider the following 371-residue polypeptide: Queuine tRNA-ribosyltransferase (371 aa).

Asp93 (proton acceptor) is an active-site residue. Substrate-binding positions include 93–97 (DSGGF), Asp147, Gln191, and Gly218. An RNA binding region spans residues 249 to 255 (GVGTPLD). Catalysis depends on Asp268, which acts as the Nucleophile. The interval 273–277 (TRNAR) is RNA binding; important for wobble base 34 recognition. Cys306, Cys308, Cys311, and His337 together coordinate Zn(2+).

It belongs to the queuine tRNA-ribosyltransferase family. In terms of assembly, homodimer. Within each dimer, one monomer is responsible for RNA recognition and catalysis, while the other monomer binds to the replacement base PreQ1. Zn(2+) serves as cofactor.

The enzyme catalyses 7-aminomethyl-7-carbaguanine + guanosine(34) in tRNA = 7-aminomethyl-7-carbaguanosine(34) in tRNA + guanine. The protein operates within tRNA modification; tRNA-queuosine biosynthesis. Catalyzes the base-exchange of a guanine (G) residue with the queuine precursor 7-aminomethyl-7-deazaguanine (PreQ1) at position 34 (anticodon wobble position) in tRNAs with GU(N) anticodons (tRNA-Asp, -Asn, -His and -Tyr). Catalysis occurs through a double-displacement mechanism. The nucleophile active site attacks the C1' of nucleotide 34 to detach the guanine base from the RNA, forming a covalent enzyme-RNA intermediate. The proton acceptor active site deprotonates the incoming PreQ1, allowing a nucleophilic attack on the C1' of the ribose to form the product. After dissociation, two additional enzymatic reactions on the tRNA convert PreQ1 to queuine (Q), resulting in the hypermodified nucleoside queuosine (7-(((4,5-cis-dihydroxy-2-cyclopenten-1-yl)amino)methyl)-7-deazaguanosine). This chain is Queuine tRNA-ribosyltransferase, found in Lawsonia intracellularis (strain PHE/MN1-00).